A 467-amino-acid polypeptide reads, in one-letter code: ATP-dependent protease ATPase subunit HslU (467 aa).

Residues valine 20, 62–67 (GVGKTE), aspartate 280, glutamate 345, and arginine 417 each bind ATP.

This sequence belongs to the ClpX chaperone family. HslU subfamily. A double ring-shaped homohexamer of HslV is capped on each side by a ring-shaped HslU homohexamer. The assembly of the HslU/HslV complex is dependent on binding of ATP.

It is found in the cytoplasm. In terms of biological role, ATPase subunit of a proteasome-like degradation complex; this subunit has chaperone activity. The binding of ATP and its subsequent hydrolysis by HslU are essential for unfolding of protein substrates subsequently hydrolyzed by HslV. HslU recognizes the N-terminal part of its protein substrates and unfolds these before they are guided to HslV for hydrolysis. The chain is ATP-dependent protease ATPase subunit HslU from Enterococcus faecalis (strain ATCC 700802 / V583).